We begin with the raw amino-acid sequence, 253 residues long: 3-dehydroquinate dehydratase (253 aa).

3-dehydroquinate contacts are provided by residues 46 to 48 and arginine 82; that span reads EWR. Catalysis depends on histidine 143, which acts as the Proton donor/acceptor. Residue lysine 170 is the Schiff-base intermediate with substrate of the active site. 3-dehydroquinate-binding residues include arginine 213, serine 232, and glutamine 236.

The protein belongs to the type-I 3-dehydroquinase family. In terms of assembly, homodimer.

The enzyme catalyses 3-dehydroquinate = 3-dehydroshikimate + H2O. It participates in metabolic intermediate biosynthesis; chorismate biosynthesis; chorismate from D-erythrose 4-phosphate and phosphoenolpyruvate: step 3/7. With respect to regulation, inhibited by flavonoids such as datiscetin, naringenin, marein and phloretin. In terms of biological role, involved in the third step of the chorismate pathway, which leads to the biosynthesis of aromatic amino acids (AroAA). Catalyzes the cis-dehydration of 3-dehydroquinate (DHQ) and introduces the first double bond of the aromatic ring to yield 3-dehydroshikimate. The reaction involves the formation of an imine intermediate between the keto group of 3-dehydroquinate and the epsilon-amino group of Lys-170 at the active site. This chain is 3-dehydroquinate dehydratase, found in Enterococcus faecalis (strain ATCC 700802 / V583).